The following is a 197-amino-acid chain: Chromophore lyase CpcT/CpeT (197 aa).

The protein belongs to the CpcT/CpeT biliprotein lyase family.

Covalently attaches a chromophore to Cys residue(s) of phycobiliproteins. This Synechococcus sp. (strain WH8103) protein is Chromophore lyase CpcT/CpeT.